Reading from the N-terminus, the 425-residue chain is tRNA(Ile)-lysidine synthase (425 aa).

27–32 provides a ligand contact to ATP; sequence SGGLDS.

Belongs to the tRNA(Ile)-lysidine synthase family.

Its subcellular location is the cytoplasm. It carries out the reaction cytidine(34) in tRNA(Ile2) + L-lysine + ATP = lysidine(34) in tRNA(Ile2) + AMP + diphosphate + H(+). Ligates lysine onto the cytidine present at position 34 of the AUA codon-specific tRNA(Ile) that contains the anticodon CAU, in an ATP-dependent manner. Cytidine is converted to lysidine, thus changing the amino acid specificity of the tRNA from methionine to isoleucine. The chain is tRNA(Ile)-lysidine synthase from Streptococcus pneumoniae (strain 70585).